Reading from the N-terminus, the 694-residue chain is Elongation factor G 1 (694 aa).

In terms of domain architecture, tr-type G spans 5 to 280 (SRYRNIGIFA…AVVDYLPDPT (276 aa)). GTP is bound by residues 14 to 21 (AHVDAGKT), 78 to 82 (DTPGH), and 132 to 135 (NKLD).

It belongs to the TRAFAC class translation factor GTPase superfamily. Classic translation factor GTPase family. EF-G/EF-2 subfamily.

It localises to the cytoplasm. Its function is as follows. Catalyzes the GTP-dependent ribosomal translocation step during translation elongation. During this step, the ribosome changes from the pre-translocational (PRE) to the post-translocational (POST) state as the newly formed A-site-bound peptidyl-tRNA and P-site-bound deacylated tRNA move to the P and E sites, respectively. Catalyzes the coordinated movement of the two tRNA molecules, the mRNA and conformational changes in the ribosome. In Methylococcus capsulatus (strain ATCC 33009 / NCIMB 11132 / Bath), this protein is Elongation factor G 1.